The following is a 387-amino-acid chain: Acetylserotonin O-methyltransferase (387 aa).

Residues Tyr153, Trp170, Glu216, 246 to 248, and Arg263 contribute to the S-adenosyl-L-methionine site; that span reads GDF. His266 serves as the catalytic Proton donor/acceptor. Residues Asp267 and Gln317 each coordinate substrate. A disordered region spans residues 355–387; that stretch reads ARGGGAGARSDGGGGEATSQTGSGTGREVGAQD. Over residues 356–370 the composition is skewed to gly residues; sequence RGGGAGARSDGGGGE.

It belongs to the class I-like SAM-binding methyltransferase superfamily. Cation-independent O-methyltransferase family. In terms of assembly, homodimer.

The enzyme catalyses N-acetylserotonin + S-adenosyl-L-methionine = melatonin + S-adenosyl-L-homocysteine + H(+). Its pathway is aromatic compound metabolism; melatonin biosynthesis; melatonin from serotonin: step 1/2. Catalyzes the transfer of a methyl group onto N-acetylserotonin, producing melatonin (N-acetyl-5-methoxytryptamine). This Mus musculus molossinus (Japanese house mouse) protein is Acetylserotonin O-methyltransferase (Asmt).